The following is a 159-amino-acid chain: Flagellar assembly factor FliW (159 aa).

This sequence belongs to the FliW family. As to quaternary structure, interacts with translational regulator CsrA and flagellin(s).

The protein resides in the cytoplasm. Acts as an anti-CsrA protein, binds CsrA and prevents it from repressing translation of its target genes, one of which is flagellin. Binds to flagellin and participates in the assembly of the flagellum. In Geobacter sulfurreducens (strain ATCC 51573 / DSM 12127 / PCA), this protein is Flagellar assembly factor FliW.